Consider the following 446-residue polypeptide: Tubulin beta chain (446 aa).

GTP contacts are provided by Q11, E69, S138, G142, T143, G144, N204, and N226. E69 contacts Mg(2+). Residues 427–446 (EAGVDEGEEFEEEEDFGDEQ) are disordered. Residues 429-446 (GVDEGEEFEEEEDFGDEQ) show a composition bias toward acidic residues.

This sequence belongs to the tubulin family. As to quaternary structure, dimer of alpha and beta chains. A typical microtubule is a hollow water-filled tube with an outer diameter of 25 nm and an inner diameter of 15 nM. Alpha-beta heterodimers associate head-to-tail to form protofilaments running lengthwise along the microtubule wall with the beta-tubulin subunit facing the microtubule plus end conferring a structural polarity. Microtubules usually have 13 protofilaments but different protofilament numbers can be found in some organisms and specialized cells. It depends on Mg(2+) as a cofactor.

The protein resides in the cytoplasm. Its subcellular location is the cytoskeleton. Functionally, tubulin is the major constituent of microtubules, a cylinder consisting of laterally associated linear protofilaments composed of alpha- and beta-tubulin heterodimers. Microtubules grow by the addition of GTP-tubulin dimers to the microtubule end, where a stabilizing cap forms. Below the cap, tubulin dimers are in GDP-bound state, owing to GTPase activity of alpha-tubulin. This chain is Tubulin beta chain, found in Giardia intestinalis (Giardia lamblia).